The sequence spans 242 residues: Phosphoribosylaminoimidazole-succinocarboxamide synthase (242 aa).

This sequence belongs to the SAICAR synthetase family.

The catalysed reaction is 5-amino-1-(5-phospho-D-ribosyl)imidazole-4-carboxylate + L-aspartate + ATP = (2S)-2-[5-amino-1-(5-phospho-beta-D-ribosyl)imidazole-4-carboxamido]succinate + ADP + phosphate + 2 H(+). Its pathway is purine metabolism; IMP biosynthesis via de novo pathway; 5-amino-1-(5-phospho-D-ribosyl)imidazole-4-carboxamide from 5-amino-1-(5-phospho-D-ribosyl)imidazole-4-carboxylate: step 1/2. The sequence is that of Phosphoribosylaminoimidazole-succinocarboxamide synthase from Ehrlichia chaffeensis (strain ATCC CRL-10679 / Arkansas).